A 300-amino-acid polypeptide reads, in one-letter code: Serine/arginine-rich splicing factor SR34A (300 aa).

The region spanning 7 to 82 is the RRM 1 domain; it reads RSIYVGNLPG…CRLRVELAHG (76 aa). Disordered regions lie at residues 81–110 and 198–300; these read HGGRGQSSSDRRGGYGGGGSGYGGGGGGGG and YESS…EGSV. The segment covering 94–110 has biased composition (gly residues); the sequence is GYGGGGSGYGGGGGGGG. The 79-residue stretch at 122–200 folds into the RRM 2 domain; sequence FRVIVRGLPS…GFIRVKKYES (79 aa). The segment covering 203-239 has biased composition (basic residues); the sequence is SRSRSPSRSRSRSRSRSRSRGRGRSHSRSRSLSRSKS. 8 positions are modified to phosphoserine: Ser-207, Ser-209, Ser-231, Ser-233, Ser-239, Ser-259, Ser-275, and Ser-285. Low complexity predominate over residues 253–262; it reads SRSISKSRSP. Residues 275–287 show a composition bias toward basic residues; that stretch reads SRSKSRSRSRSRS.

The protein belongs to the splicing factor SR family. SR subfamily. Component of the spliceosome.

It is found in the nucleus speckle. It localises to the nucleus. The protein localises to the nucleoplasm. Functionally, probably involved in intron recognition and spliceosome assembly. The chain is Serine/arginine-rich splicing factor SR34A (SR34A) from Arabidopsis thaliana (Mouse-ear cress).